A 362-amino-acid polypeptide reads, in one-letter code: Heat-inducible transcription repressor HrcA (362 aa).

This sequence belongs to the HrcA family.

In terms of biological role, negative regulator of class I heat shock genes (grpE-dnaK-dnaJ and groELS operons). Prevents heat-shock induction of these operons. The sequence is that of Heat-inducible transcription repressor HrcA from Rhizobium johnstonii (strain DSM 114642 / LMG 32736 / 3841) (Rhizobium leguminosarum bv. viciae).